The chain runs to 585 residues: Lipoprotein LpqB (585 aa).

An N-terminal signal peptide occupies residues Met-1–Gly-17. Residue Cys-18 is the site of N-palmitoyl cysteine attachment. Residue Cys-18 is the site of S-diacylglycerol cysteine attachment. Disordered stretches follow at residues Ser-24 to Met-48 and Pro-560 to Gly-585.

It belongs to the LpqB lipoprotein family.

Its subcellular location is the cell membrane. This Mycolicibacterium paratuberculosis (strain ATCC BAA-968 / K-10) (Mycobacterium paratuberculosis) protein is Lipoprotein LpqB.